Here is a 309-residue protein sequence, read N- to C-terminus: Homoserine O-succinyltransferase (309 aa).

The active-site Acyl-thioester intermediate is cysteine 142. Positions 163 and 192 each coordinate substrate. Catalysis depends on histidine 235, which acts as the Proton acceptor. Glutamate 237 is an active-site residue. Arginine 249 is a binding site for substrate.

This sequence belongs to the MetA family.

Its subcellular location is the cytoplasm. It catalyses the reaction L-homoserine + succinyl-CoA = O-succinyl-L-homoserine + CoA. The protein operates within amino-acid biosynthesis; L-methionine biosynthesis via de novo pathway; O-succinyl-L-homoserine from L-homoserine: step 1/1. Its function is as follows. Transfers a succinyl group from succinyl-CoA to L-homoserine, forming succinyl-L-homoserine. The protein is Homoserine O-succinyltransferase of Serratia proteamaculans (strain 568).